Consider the following 610-residue polypeptide: tRNA uridine 5-carboxymethylaminomethyl modification enzyme MnmG (610 aa).

G14 to G19 contributes to the FAD binding site. G274 to F288 serves as a coordination point for NAD(+).

This sequence belongs to the MnmG family. Homodimer. Heterotetramer of two MnmE and two MnmG subunits. The cofactor is FAD.

Its subcellular location is the cytoplasm. Functionally, NAD-binding protein involved in the addition of a carboxymethylaminomethyl (cmnm) group at the wobble position (U34) of certain tRNAs, forming tRNA-cmnm(5)s(2)U34. In Chlamydia trachomatis serovar D (strain ATCC VR-885 / DSM 19411 / UW-3/Cx), this protein is tRNA uridine 5-carboxymethylaminomethyl modification enzyme MnmG.